Reading from the N-terminus, the 228-residue chain is Protein ULTRAPETALA 2 (228 aa).

Positions 14–121 (EELQEISGVH…NKALKNSNVS (108 aa)) constitute an SAND domain.

As to expression, expressed in influorescence, pollen and siliques, with a higher expression in influorescence.

The protein localises to the cytoplasm. The protein resides in the nucleus. Its function is as follows. Putative transcription factor that acts as a key negative regulator of cell accumulation in shoot and floral meristems. Negatively regulates the size of the WUSCHEL (WUS)-expressing organizing center in inflorescence meristems. May act by down-regulating expression of WUS. Can compensate for mutant ULT1 protein when overexpressed. This Arabidopsis thaliana (Mouse-ear cress) protein is Protein ULTRAPETALA 2 (ULT2).